The following is a 218-amino-acid chain: Small ribosomal subunit protein uS3c (218 aa).

In terms of domain architecture, KH type-2 spans 47-118; sequence VQKNIRISSG…KLNIAITRIS (72 aa).

Belongs to the universal ribosomal protein uS3 family. As to quaternary structure, part of the 30S ribosomal subunit.

It localises to the plastid. It is found in the chloroplast. The chain is Small ribosomal subunit protein uS3c (rps3) from Crucihimalaya wallichii (Rock-cress).